Here is a 328-residue protein sequence, read N- to C-terminus: 2-oxoglutarate-dependent dioxygenase gloF (328 aa).

The Fe2OG dioxygenase domain occupies 175–289 (DTSELRMNHY…RYSVAYFGKP (115 aa)). Fe cation is bound by residues His-201, Asp-203, and His-261. Arg-280 contacts 2-oxoglutarate.

The protein belongs to the iron/ascorbate-dependent oxidoreductase family. Requires Fe(2+) as cofactor.

It functions in the pathway mycotoxin biosynthesis. In terms of biological role, 2-oxoglutarate-dependent dioxygenase; part of the gene cluster that mediates the biosynthesis of pneumocandins, lipohexapeptides of the echinocandin family that prevent fungal cell wall formation by non-competitive inhibition of beta-1,3-glucan synthase. The 10,12-dimethylmyristoyl side chain is synthesized by the reducing polyketide synthase gloL/GLPKS4. The thioesterase gloN/GLHYD exclusively interacts with gloL/GLPKS4 to maintain turnover of the polyketide side chain. The 10R,12S-dimethylmyristic acid is then transferred to the first thiolation domain of the nonribosomal peptide synthetase gloA/GLNRPS4 by the acyl-AMP ligase gloD/GLligase, followed by its acylation to L-ornithine to trigger elongation of the cyclic hexapeptide. L-ornithine, 4R-hydroxyl-L-proline (generated from L-proline by the dioxygenase gloF/GLOXY2), 3S-hydroxyl-L-homotyrosine (generated by gloG/GLHtyB, gloH/GLHtyA, gloI/GLHtyC, gloJ/GLHtyD and hydroxylated at C-3 by the dioxygenase gloM/GLOXY1), 3R-hydroxyl-L-glutamine (generated from L-glutamine probably by the dioxygenase gloE/GLOXY3) and 3S-hydroxyl-L-proline (generated from L-proline by the dioxygenase gloF/GLOXY2 to yield pneumocandin B0), or 3S-hydroxyl-4S-methyl-L-proline (generated from L-leucine by the dioxygenase gloC/GLOXY4 to yield pneumocandin A0) are sequentially added to the growing chain. The last C domain of gloA/GLNRPS4 is proposed to be responsible for cyclization by condensation to form the peptide bond between L-ornithine and 3S-hydroxyl-4S-methyl-L-proline (for pneumocandin A0) or 3S-hydroxyl-L-proline (for pneumocandin B0). Finally, the subsequent C-4 hydroxylation of 3S-hydroxyl-L-homotyrosine and L-ornithine dihydroxylation at C-4 and C-5 are performed by the cytochrome P450 monooxygenases gloP/GLP450-1 and gloO/GLP450-2, respectively. The sequence is that of 2-oxoglutarate-dependent dioxygenase gloF from Glarea lozoyensis (strain ATCC 20868 / MF5171).